A 332-amino-acid chain; its full sequence is Alanine racemase (332 aa).

Catalysis depends on Lys-33, which acts as the Proton acceptor; specific for D-alanine. Lys-33 carries the post-translational modification N6-(pyridoxal phosphate)lysine. A substrate-binding site is contributed by Arg-115. The active-site Proton acceptor; specific for L-alanine is the Tyr-245. Met-286 is a substrate binding site.

This sequence belongs to the alanine racemase family. Requires pyridoxal 5'-phosphate as cofactor.

The catalysed reaction is L-alanine = D-alanine. It participates in amino-acid biosynthesis; D-alanine biosynthesis; D-alanine from L-alanine: step 1/1. In terms of biological role, catalyzes the interconversion of L-alanine and D-alanine. May also act on other amino acids. This Nitratiruptor sp. (strain SB155-2) protein is Alanine racemase (alr).